A 237-amino-acid chain; its full sequence is Chalcone--flavanone isomerase 1 (237 aa).

Residues threonine 48, asparagine 113, and serine 190 each coordinate substrate.

The protein belongs to the chalcone isomerase family.

The catalysed reaction is a chalcone = a flavanone.. It participates in secondary metabolite biosynthesis; flavonoid biosynthesis. In terms of biological role, catalyzes the intramolecular cyclization of bicyclic chalcones into tricyclic (S)-flavanones. Responsible for the isomerization of 4,2',4',6'-tetrahydroxychalcone (also termed chalcone) into naringenin. This Fragaria ananassa (Strawberry) protein is Chalcone--flavanone isomerase 1 (CHI1).